A 637-amino-acid chain; its full sequence is Serine protease Hayan (637 aa).

Residues 1-26 (MAMISARRYFLLGLLVLTTSAYVTVG) form the signal peptide. The region spanning 31–79 (PCQVRSDIPGICLSSSACENIRGYLKSGTLSTSQVPSCGFGAREEIICC) is the Clip domain. Disulfide bonds link Cys-32/Cys-78, Cys-42/Cys-68, and Cys-48/Cys-79. Disordered regions lie at residues 95-137 (FHAT…LDEN), 152-178 (KPQK…SMKM), 216-260 (QRSF…NNNN), and 286-365 (LQTT…EKER). The span at 125–136 (EGKRERESRLDE) shows a compositional bias: basic and acidic residues. A compositionally biased stretch (polar residues) spans 234 to 244 (PLTTPRSRPQR). Over residues 245–260 (PNNSNFNTNPSPNNNN) the composition is skewed to low complexity. A compositionally biased stretch (basic and acidic residues) spans 306-320 (EPYRFRGQDRDKDTQ). A compositionally biased stretch (polar residues) spans 321-332 (PQEPWNDVSNNL). 4 cysteine pairs are disulfide-bonded: Cys-371/Cys-497, Cys-414/Cys-430, Cys-543/Cys-567, and Cys-578/Cys-609. A Peptidase S1 domain is found at 385-632 (ILDGERVDRG…FLDYIEGIVW (248 aa)). Residues His-429 and Asp-477 each act as charge relay system in the active site. Ser-582 (charge relay system) is an active-site residue.

The protein belongs to the peptidase S1 family. CLIP subfamily.

It is found in the secreted. Serine protease which, by converting prophenoloxidase 1 (PPO1) into its active form, plays an essential role in the melanization immune response to physical or septic wounding. May function in diverse PPO1-activating cascades that are negatively controlled by different serpin proteins; Spn27A and Spn28D in the hemolymph, and Spn28D and Spn77BA in the trachea. Also required in the systematic wound response by mediating the redox-dependent activation of the JNK cytoprotective cascade in neuronal tissues after integument wounding. The sequence is that of Serine protease Hayan from Drosophila melanogaster (Fruit fly).